The primary structure comprises 41 residues: Histone H3.2 (41 aa).

The interval 1–41 (MARAKQTARKSTGAEAPRKQLASKAARKSAPATGGIKKPHR) is disordered.

Belongs to the histone H3 family. As to quaternary structure, the nucleosome is a histone octamer containing two molecules each of H2A, H2B, H3 and H4 assembled in one H3-H4 heterotetramer and two H2A-H2B heterodimers. The octamer wraps approximately 147 bp of DNA.

It is found in the nucleus. The protein localises to the chromosome. Core component of nucleosome. Nucleosomes wrap and compact DNA into chromatin, limiting DNA accessibility to the cellular machineries which require DNA as a template. Histones thereby play a central role in transcription regulation, DNA repair, DNA replication and chromosomal stability. DNA accessibility is regulated via a complex set of post-translational modifications of histones, also called histone code, and nucleosome remodeling. The protein is Histone H3.2 of Tetrahymena borealis.